Here is a 166-residue protein sequence, read N- to C-terminus: Phosphopantetheine adenylyltransferase (166 aa).

Position 8 (Ser-8) interacts with substrate. ATP contacts are provided by residues 8-9 (SF) and His-16. Residues Lys-40, Thr-72, and Arg-86 each coordinate substrate. ATP is bound by residues 87–89 (GLR), Glu-97, and 122–128 (HSFLSSS).

Belongs to the bacterial CoaD family. Homohexamer. It depends on Mg(2+) as a cofactor.

It localises to the cytoplasm. The enzyme catalyses (R)-4'-phosphopantetheine + ATP + H(+) = 3'-dephospho-CoA + diphosphate. Its pathway is cofactor biosynthesis; coenzyme A biosynthesis; CoA from (R)-pantothenate: step 4/5. Reversibly transfers an adenylyl group from ATP to 4'-phosphopantetheine, yielding dephospho-CoA (dPCoA) and pyrophosphate. This chain is Phosphopantetheine adenylyltransferase, found in Synechococcus sp. (strain RCC307).